The primary structure comprises 149 residues: Transcriptional repressor NrdR (149 aa).

The segment at 3-34 (CPFCSHQETQVVETRVSEDGDFIRRRRQCGAC) is a zinc-finger region. An ATP-cone domain is found at 49–139 (PTVVKKDGRR…VYRSFEDIDE (91 aa)).

This sequence belongs to the NrdR family. It depends on Zn(2+) as a cofactor.

In terms of biological role, negatively regulates transcription of bacterial ribonucleotide reductase nrd genes and operons by binding to NrdR-boxes. This is Transcriptional repressor NrdR from Acidovorax sp. (strain JS42).